The chain runs to 131 residues: Single-stranded DNA-binding protein 2 (131 aa).

In terms of domain architecture, SSB spans 1 to 103 (MYNKVIMIGR…VLASSFQLLE (103 aa)). The Important for interaction with partner proteins signature appears at 126-131 (EEELPF).

Homotetramer.

Plays an important role in DNA replication, recombination and repair. Binds to ssDNA and to an array of partner proteins to recruit them to their sites of action during DNA metabolism. This Streptococcus agalactiae serotype V (strain ATCC BAA-611 / 2603 V/R) protein is Single-stranded DNA-binding protein 2 (ssb2).